We begin with the raw amino-acid sequence, 216 residues long: Adenylate kinase (216 aa).

Residue 10–15 coordinates ATP; the sequence is GAGKGT. The tract at residues 30-59 is NMP; it reads STGDIFRKNISEKTPLGVKAKEYMDKGQLV. Residues T31, R36, 57–59, 85–88, and Q92 contribute to the AMP site; these read QLV and GFPR. The tract at residues 126–163 is LID; that stretch reads GRRVCPSCGASYHIKFNPPKIEGLCDVCKKEVIQRKDD. R127 serves as a coordination point for ATP. Residues C130 and C133 each contribute to the Zn(2+) site. An ATP-binding site is contributed by 136-137; it reads SY. Zn(2+) contacts are provided by C150 and C153. AMP-binding residues include R160 and R171. Q199 contacts ATP.

The protein belongs to the adenylate kinase family. In terms of assembly, monomer.

It is found in the cytoplasm. The catalysed reaction is AMP + ATP = 2 ADP. It functions in the pathway purine metabolism; AMP biosynthesis via salvage pathway; AMP from ADP: step 1/1. Catalyzes the reversible transfer of the terminal phosphate group between ATP and AMP. Plays an important role in cellular energy homeostasis and in adenine nucleotide metabolism. In Clostridium novyi (strain NT), this protein is Adenylate kinase.